The sequence spans 212 residues: Nitric oxide synthase (212 aa).

Y11 is a binding site for heme b. The tract at residues K30–M50 is calmodulin-binding. The 153-residue stretch at A60–G212 folds into the Flavodoxin-like domain. The interval S155–S175 is disordered. The span at D158 to F173 shows a compositional bias: basic and acidic residues. A186–G212 lines the FMN pocket.

It belongs to the NOS family. It depends on heme b as a cofactor. The cofactor is FAD. Requires FMN as cofactor.

The catalysed reaction is 2 L-arginine + 3 NADPH + 4 O2 + H(+) = 2 L-citrulline + 2 nitric oxide + 3 NADP(+) + 4 H2O. Produces nitric oxide (NO) which is a messenger molecule with diverse functions throughout the body. This is Nitric oxide synthase from Squalus acanthias (Spiny dogfish).